A 120-amino-acid chain; its full sequence is NAD(P)H-quinone oxidoreductase subunit 3, chloroplastic (120 aa).

Helical transmembrane passes span 10 to 30 (FLVF…ASKL), 64 to 84 (MFAL…PWAV), and 89 to 109 (MGFI…VGLV).

The protein belongs to the complex I subunit 3 family. NDH is composed of at least 16 different subunits, 5 of which are encoded in the nucleus.

Its subcellular location is the plastid. It localises to the chloroplast thylakoid membrane. The enzyme catalyses a plastoquinone + NADH + (n+1) H(+)(in) = a plastoquinol + NAD(+) + n H(+)(out). The catalysed reaction is a plastoquinone + NADPH + (n+1) H(+)(in) = a plastoquinol + NADP(+) + n H(+)(out). Functionally, NDH shuttles electrons from NAD(P)H:plastoquinone, via FMN and iron-sulfur (Fe-S) centers, to quinones in the photosynthetic chain and possibly in a chloroplast respiratory chain. The immediate electron acceptor for the enzyme in this species is believed to be plastoquinone. Couples the redox reaction to proton translocation, and thus conserves the redox energy in a proton gradient. This chain is NAD(P)H-quinone oxidoreductase subunit 3, chloroplastic, found in Chlorokybus atmophyticus (Soil alga).